We begin with the raw amino-acid sequence, 343 residues long: UDP-glucuronic acid decarboxylase 6 (343 aa).

The tract at residues M1–R22 is disordered. N-acetylalanine is present on A2. D62 to D87 lines the NAD(+) pocket. R171 is a substrate binding site. Y174 serves as the catalytic Proton acceptor. Y174–K178 provides a ligand contact to NAD(+). N203 contacts substrate. R215 contacts NAD(+). Residues V216–F220, Q233–R240, and D300–R304 contribute to the substrate site.

Belongs to the NAD(P)-dependent epimerase/dehydratase family. UDP-glucuronic acid decarboxylase subfamily. NAD(+) is required as a cofactor.

It localises to the cytoplasm. It carries out the reaction UDP-alpha-D-glucuronate + H(+) = UDP-alpha-D-xylose + CO2. The protein operates within nucleotide-sugar biosynthesis; UDP-alpha-D-xylose biosynthesis; UDP-alpha-D-xylose from UDP-alpha-D-glucuronate: step 1/1. Catalyzes the NAD-dependent decarboxylation of UDP-glucuronic acid to UDP-xylose. Necessary for the biosynthesis of the core tetrasaccharide in glycosaminoglycan biosynthesis. This is UDP-glucuronic acid decarboxylase 6 (UXS6) from Arabidopsis thaliana (Mouse-ear cress).